Consider the following 531-residue polypeptide: Protein arginine N-methyltransferase 3 (531 aa).

Residues 1-43 are disordered; that stretch reads MCSLASGATGGRGAVENEEDLPELSDSGDEAAWEDEDDADLPH. Cysteine 2 carries the post-translational modification N-acetylcysteine. A compositionally biased stretch (acidic residues) spans 16–39; sequence ENEEDLPELSDSGDEAAWEDEDDA. Serine 25 and serine 27 each carry phosphoserine. The segment at 48 to 71 adopts a C2H2-type zinc-finger fold; that stretch reads TPCLFCNRLFTSAEETFSHCKSEH. An interaction with ZNF200 region spans residues 48–71; it reads TPCLFCNRLFTSAEETFSHCKSEH. Serine 171 is modified (phosphoserine). Residues 186-531 form a mediates interaction with ALDH1A1 region; sequence MKQFAQDFVM…NNSTQTYGLQ (346 aa). Residues 217 to 531 form the SAM-dependent MTase PRMT-type domain; that stretch reads DGVYFSSYGH…NNSTQTYGLQ (315 aa). S-adenosyl-L-homocysteine is bound by residues arginine 239, glycine 263, aspartate 285, isoleucine 313, and glutamate 314. Active-site residues include glutamate 329 and glutamate 338. Serine 343 provides a ligand contact to S-adenosyl-L-homocysteine.

It belongs to the class I-like SAM-binding methyltransferase superfamily. Protein arginine N-methyltransferase family. Monomer and homodimer. Interacts with EPB41L3 (via FERM domain); the interaction is direct and inhibits the protein-arginine N-methyltransferase activity of PRMT3. Interacts with the 40S ribosomal protein RPS2. Interacts with ALDH1A1; the interaction is direct, inhibits ALDH1A1 aldehyde dehydrogenase activity and is independent of the methyltransferase activity of PRMT3. Interacts (via zinc-finger) with ZNF200 (via C-terminus); the interaction is direct and required to localize PRMT3 to the nucleus and inhibit its proteasomal degradation.

It is found in the cytoplasm. It localises to the cytosol. The protein localises to the nucleus. It catalyses the reaction L-arginyl-[protein] + S-adenosyl-L-methionine = N(omega)-methyl-L-arginyl-[protein] + S-adenosyl-L-homocysteine + H(+). The catalysed reaction is L-arginyl-[protein] + 2 S-adenosyl-L-methionine = N(omega),N(omega)-dimethyl-L-arginyl-[protein] + 2 S-adenosyl-L-homocysteine + 2 H(+). Inhibited by N-ethylmaleimide and high concentrations of zinc chloride. Allosterically inhibited by SGC707. Allosterically inhibited by (1-(benzo[d][1,2,3]thiadiazol- 6-yl)-3-(2-cyclohexenylethyl)urea) and derivatives thereof. In terms of biological role, protein-arginine N-methyltransferase that catalyzes both the monomethylation and asymmetric dimethylation of the guanidino nitrogens of arginine residues in target proteins, and therefore falls into the group of type I methyltransferases. Catalyzes the asymmetric arginine dimethylation at multiple sites in the Arg/Gly-rich region of small ribosomal subunit protein uS5/RPS2. Also appears to methylate other ribosomal proteins. May regulate retinoic acid synthesis and signaling by inhibiting ALDH1A1 retinal dehydrogenase activity. Contributes to methylation of histone H4 'Arg-3', a specific tag for epigenetic transcriptional activation. Mediates asymmetric arginine dimethylation of histone H4 'Arg-3' (H4R3me2a) in the promoter region of miRNA miR-3648, to promote its transcription and osteogenesis. The chain is Protein arginine N-methyltransferase 3 from Homo sapiens (Human).